Here is a 1128-residue protein sequence, read N- to C-terminus: Apoptosis-stimulating of p53 protein 2 (1128 aa).

The tract at residues 85–120 (PPNRDIVSGPRSQDPSVKRNGVKVPGEHRRKENGVN) is disordered. The interval 332–348 (NLPQQAVSAPSRVAAVG) is interaction with APPBP1. The disordered stretch occupies residues 393 to 436 (MRSGAASQSKGSKAHPASPDWNPSNADLLPSQGSSVPQSAGTAL). Positions 413–433 (WNPSNADLLPSQGSSVPQSAG) are enriched in polar residues. Phosphoserine is present on residues Ser479, Ser555, Ser568, Ser571, and Ser575. Disordered regions lie at residues 549-596 (QARM…FPPA) and 654-705 (NPQQ…LPFL). Over residues 562 to 574 (GQDQVLSPASKQE) the composition is skewed to polar residues. A compositionally biased stretch (polar residues) spans 654 to 669 (NPQQHPENIYSCSQGK). The segment covering 684 to 693 (HESHENERIP) has biased composition (basic and acidic residues). 3 positions are modified to phosphoserine: Ser697, Ser713, and Ser736. Disordered regions lie at residues 723-748 (KLSN…GPNI), 802-824 (SLVP…SDVP), and 870-907 (PPPP…KRTN). Positions 866-875 (YPPYPPPPYP) match the SH3-binding motif. A mediates interaction with APC2 region spans residues 876–1128 (SGEPEVSEED…RIKPRQRSLA (253 aa)). 2 ANK repeats span residues 958 to 987 (EGIT…NVNA) and 991 to 1020 (DGWT…AVFA). One can recognise an SH3 domain in the interval 1057–1119 (MNKGVIYALW…PRNLLGLYPR (63 aa)).

Belongs to the ASPP family. Interacts with P53/TP53; the interaction promotes pro-apoptotic activity. Interacts with BCL2. Interacts with protein phosphatase 1. Interacts with RELA NF-kappa-B subunit. This interaction probably prevents the activation of apoptosis, possibly by preventing its interaction with p53/TP53. Interacts with APC2 and APPBP1. Interacts with DDX42 (via the C-terminus); the interaction is not inhibited by TP53BP2 ubiquitination and is independent of p53/TP53.

The protein resides in the cytoplasm. The protein localises to the perinuclear region. It localises to the nucleus. Its function is as follows. Regulator that plays a central role in regulation of apoptosis and cell growth via its interactions with proteins such as TP53. Regulates p53/TP53 by enhancing the DNA binding and transactivation function of p53/TP53 on the promoters of proapoptotic genes in vivo. Inhibits the ability of APPBP1 to conjugate NEDD8 to CUL1, and thereby decreases APPBP1 ability to induce apoptosis. Impedes cell cycle progression at G2/M. Its apoptosis-stimulating activity is inhibited by its interaction with DDX42. This chain is Apoptosis-stimulating of p53 protein 2 (Tp53bp2), found in Mus musculus (Mouse).